Here is a 323-residue protein sequence, read N- to C-terminus: Elongation factor P--(R)-beta-lysine ligase (323 aa).

Residue Ser76 to Glu78 participates in substrate binding. ATP is bound by residues Arg100–Glu102 and Asn109. Tyr118 contributes to the substrate binding site. An ATP-binding site is contributed by Glu242–Leu243. Glu249 is a binding site for substrate. Gly298 is a binding site for ATP.

The protein belongs to the class-II aminoacyl-tRNA synthetase family. EpmA subfamily. In terms of assembly, homodimer.

It carries out the reaction D-beta-lysine + L-lysyl-[protein] + ATP = N(6)-((3R)-3,6-diaminohexanoyl)-L-lysyl-[protein] + AMP + diphosphate + H(+). Functionally, with EpmB is involved in the beta-lysylation step of the post-translational modification of translation elongation factor P (EF-P). Catalyzes the ATP-dependent activation of (R)-beta-lysine produced by EpmB, forming a lysyl-adenylate, from which the beta-lysyl moiety is then transferred to the epsilon-amino group of a conserved specific lysine residue in EF-P. The polypeptide is Elongation factor P--(R)-beta-lysine ligase (Haemophilus influenzae (strain PittGG)).